A 401-amino-acid chain; its full sequence is 8-amino-7-oxononanoate synthase (401 aa).

Arg-19 is a substrate binding site. Gly-106–Tyr-107 lines the pyridoxal 5'-phosphate pocket. Residue His-131 participates in substrate binding. Residues Ser-176, His-204, and Thr-233 each coordinate pyridoxal 5'-phosphate. N6-(pyridoxal phosphate)lysine is present on Lys-236. Thr-350 lines the substrate pocket.

This sequence belongs to the class-II pyridoxal-phosphate-dependent aminotransferase family. BioF subfamily. In terms of assembly, homodimer. Requires pyridoxal 5'-phosphate as cofactor.

The catalysed reaction is 6-carboxyhexanoyl-[ACP] + L-alanine + H(+) = (8S)-8-amino-7-oxononanoate + holo-[ACP] + CO2. Its pathway is cofactor biosynthesis; biotin biosynthesis. Its function is as follows. Catalyzes the decarboxylative condensation of pimeloyl-[acyl-carrier protein] and L-alanine to produce 8-amino-7-oxononanoate (AON), [acyl-carrier protein], and carbon dioxide. The polypeptide is 8-amino-7-oxononanoate synthase (Pseudomonas aeruginosa (strain ATCC 15692 / DSM 22644 / CIP 104116 / JCM 14847 / LMG 12228 / 1C / PRS 101 / PAO1)).